The sequence spans 150 residues: SPbeta prophage-derived uncharacterized protein YoqH (150 aa).

The N-terminal stretch at 1 to 23 (MKRFILVLSFLSIIVAYPIQTNA) is a signal peptide.

In Bacillus subtilis (strain 168), this protein is SPbeta prophage-derived uncharacterized protein YoqH (yoqH).